The chain runs to 195 residues: Transcription repressor OFP17 (195 aa).

In terms of domain architecture, OVATE spans 130-190; it reads EDNAVEDACR…SRFYGELCRD (61 aa).

It is found in the nucleus. Its function is as follows. Transcriptional repressor that may regulate multiple aspects of plant growth and development through the regulation of BEL1-LIKE (BLH) and KNOX TALE (KNAT) homeodomain transcription factors. The protein is Transcription repressor OFP17 (OFP17) of Arabidopsis thaliana (Mouse-ear cress).